The sequence spans 855 residues: MICAL-like protein 1 (855 aa).

The region spanning 2–108 (AGPRGALLAW…YVSQYYNHFT (107 aa)) is the Calponin-homology (CH) domain. Disordered stretches follow at residues 110 to 165 (SGQA…SSAC), 226 to 253 (GRSGTRPLSLQKQQPAAAAEAKDGEDSD), and 269 to 659 (QASS…HGFP). The span at 124-135 (PAAPSPTSTSPA) shows a compositional bias: low complexity. Positions 163–226 (SACAACGQRV…ERCTRLGLGG (64 aa)) constitute an LIM zinc-binding domain. Residues 269–278 (QASSEVQPHT) show a composition bias toward polar residues. Residues Ser293 and Ser307 each carry the phosphoserine modification. The segment covering 308–325 (ESSALTPPTPRPRSSLQQ) has biased composition (polar residues). A phosphothreonine mark is found at Thr313 and Thr316. Residues 356-367 (LSERMTAPRKDP) are compositionally biased toward basic and acidic residues. The NPF1 signature appears at 423–425 (NPF). The segment covering 425–434 (FEEEEEEEEA) has biased composition (acidic residues). Over residues 439–449 (VPSPAPAPPET) the composition is skewed to pro residues. Thr461 and Thr463 each carry phosphothreonine. 4 positions are modified to phosphoserine: Ser464, Ser465, Ser478, and Ser480. Positions 499–514 (PSPALSVESLSSESSS) are enriched in low complexity. Residues 542–554 (PGTSANSVTPSAH) show a composition bias toward polar residues. Positions 555–570 (SSLSSSGELGQPSGEQ) are enriched in low complexity. Ser613 is modified (phosphoserine). The short motif at 625–627 (NPF) is the NPF2 element. The mediates the interaction with RAB13 and intramolecular interaction with the calponin-homology (CH) domain stretch occupies residues 644 to 855 (KGAKPVRPPA…AKSKAPTGKS (212 aa)). The bMERB domain occupies 663 to 810 (RKVQADQYIP…EEEEDKMLET (148 aa)). A coiled-coil region spans residues 679–703 (EMDSIERQLDALEHSGVLLEEKLRG). Ser682 and Ser732 each carry phosphoserine. The tract at residues 692–855 (HSGVLLEEKL…AKSKAPTGKS (164 aa)) is necessary and sufficient to associate with tubular recycling endosome membranes, mediate phosphatidic acid-binding and membrane tubulation. A coiled-coil region spans residues 794-822 (LDEDRQREEEEDKMLETMIKKKDFQREAE). Residues 815–826 (KDFQREAESDSK) show a composition bias toward basic and acidic residues. The tract at residues 815–855 (KDFQREAESDSKKKGKFKTMKVLKLLGNKRDAKSKAPTGKS) is disordered.

As to quaternary structure, homooligomer. Interacts (via NPF1 motif) with EHD1 (via EH domain); the interaction is direct and probably recruits EHD1 to membranes. Interacts with EHD3 (via EH domain). Interacts with RAB35 (GTP-bound form); the interaction is direct and probably recruits MICALL1 to membranes. Interacts with ACAP2; the interaction is indirect through RAB35. Interacts with RAB8A (GTP-bound form); regulates RAB8A association with recycling endosomes. Interacts with RAB13 (GTP-bound form). Interacts with ARF6 (GTP-bound form). Interacts with PACSIN2 (via the SH3 domain). Interacts with DPYSL2.

Its subcellular location is the recycling endosome membrane. It localises to the late endosome membrane. The protein resides in the cell projection. It is found in the cilium membrane. The protein localises to the cytoplasm. Its subcellular location is the cytoskeleton. It localises to the microtubule organizing center. The protein resides in the centrosome. It is found in the centriole. Its function is as follows. Lipid-binding protein with higher affinity for phosphatidic acid, a lipid enriched in recycling endosome membranes. On endosome membranes, acts as a downstream effector of Rab proteins recruiting cytosolic proteins to regulate membrane tubulation. Involved in a late step of receptor-mediated endocytosis regulating for instance endocytosed-EGF receptor trafficking. Alternatively, regulates slow endocytic recycling of endocytosed proteins back to the plasma membrane. Also involved in cargo protein delivery to the plasma membrane. Plays a role in ciliogenesis coordination, recruits EHD1 to primary cilium where it is anchored to the centriole through interaction with tubulins. May indirectly play a role in neurite outgrowth. The protein is MICAL-like protein 1 (Micall1) of Rattus norvegicus (Rat).